The primary structure comprises 427 residues: Serine--tRNA ligase (427 aa).

231–233 (TAE) contacts L-serine. Residue 262-264 (RSE) coordinates ATP. E285 is a binding site for L-serine. 349–352 (EISS) provides a ligand contact to ATP. L-serine is bound at residue S385.

This sequence belongs to the class-II aminoacyl-tRNA synthetase family. Type-1 seryl-tRNA synthetase subfamily. Homodimer. The tRNA molecule binds across the dimer.

The protein resides in the cytoplasm. It catalyses the reaction tRNA(Ser) + L-serine + ATP = L-seryl-tRNA(Ser) + AMP + diphosphate + H(+). It carries out the reaction tRNA(Sec) + L-serine + ATP = L-seryl-tRNA(Sec) + AMP + diphosphate + H(+). The protein operates within aminoacyl-tRNA biosynthesis; selenocysteinyl-tRNA(Sec) biosynthesis; L-seryl-tRNA(Sec) from L-serine and tRNA(Sec): step 1/1. In terms of biological role, catalyzes the attachment of serine to tRNA(Ser). Is also able to aminoacylate tRNA(Sec) with serine, to form the misacylated tRNA L-seryl-tRNA(Sec), which will be further converted into selenocysteinyl-tRNA(Sec). This Sinorhizobium fredii (strain NBRC 101917 / NGR234) protein is Serine--tRNA ligase.